We begin with the raw amino-acid sequence, 400 residues long: Glutamyl-tRNA reductase (400 aa).

Residues 45–48, serine 103, 108–110, and glutamine 114 each bind substrate; these read TCNR and EDQ. Catalysis depends on cysteine 46, which acts as the Nucleophile. NADP(+) is bound at residue 179–184; sequence GYGEIG.

It belongs to the glutamyl-tRNA reductase family. In terms of assembly, homodimer.

The enzyme catalyses (S)-4-amino-5-oxopentanoate + tRNA(Glu) + NADP(+) = L-glutamyl-tRNA(Glu) + NADPH + H(+). It participates in porphyrin-containing compound metabolism; protoporphyrin-IX biosynthesis; 5-aminolevulinate from L-glutamyl-tRNA(Glu): step 1/2. Functionally, catalyzes the NADPH-dependent reduction of glutamyl-tRNA(Glu) to glutamate 1-semialdehyde (GSA). The sequence is that of Glutamyl-tRNA reductase from Clostridium perfringens (strain 13 / Type A).